A 257-amino-acid chain; its full sequence is Coenzyme F420:L-glutamate ligase (257 aa).

GTP contacts are provided by residues 9 to 12, 38 to 39, and K43; these read VPEV and ST. A divalent metal cation is bound at residue D113. Residue N116 coordinates GTP. Positions 154, 155, and 212 each coordinate a divalent metal cation. GTP is bound at residue 210-217; the sequence is TGEGDGGT.

Belongs to the CofE family. In terms of assembly, homodimer. The cofactor is Mg(2+). Mn(2+) serves as cofactor. K(+) is required as a cofactor.

The enzyme catalyses oxidized coenzyme F420-0 + GTP + L-glutamate = oxidized coenzyme F420-1 + GDP + phosphate + H(+). It carries out the reaction oxidized coenzyme F420-1 + GTP + L-glutamate = oxidized coenzyme F420-2 + GDP + phosphate + H(+). It participates in cofactor biosynthesis; coenzyme F420 biosynthesis. Functionally, catalyzes the GTP-dependent successive addition of two or more gamma-linked L-glutamates to the L-lactyl phosphodiester of 7,8-didemethyl-8-hydroxy-5-deazariboflavin (F420-0) to form coenzyme F420-0-glutamyl-glutamate (F420-2) or polyglutamated F420 derivatives. The protein is Coenzyme F420:L-glutamate ligase of Haloarcula marismortui (strain ATCC 43049 / DSM 3752 / JCM 8966 / VKM B-1809) (Halobacterium marismortui).